Here is a 675-residue protein sequence, read N- to C-terminus: L-type lectin-domain containing receptor kinase IV.1 (675 aa).

Residues 1–22 form the signal peptide; that stretch reads MFLKLLTIFFFFFFNLIFQSSS. Over 23 to 291 the chain is Extracellular; sequence QSLNFAYNNG…EPKRISEFYK (269 aa). The legume-lectin like stretch occupies residues 25 to 261; the sequence is LNFAYNNGFN…SEHYILGWSF (237 aa). N57, N79, N112, N134, N153, and N186 each carry an N-linked (GlcNAc...) asparagine glycan. A helical transmembrane segment spans residues 292 to 312; it reads IGMPLISLFLIFSFIFLVCYI. Residues 313–675 lie on the Cytoplasmic side of the membrane; that stretch reads VRRRRKFAEE…IADSQLSGGR (363 aa). Positions 347–624 constitute a Protein kinase domain; sequence FKEKGLLGTG…LHYLRGDAKL (278 aa). ATP contacts are provided by residues 353–361 and K376; that span reads LGTGGFGSV. D472 (proton acceptor) is an active-site residue.

The protein in the C-terminal section; belongs to the protein kinase superfamily. Ser/Thr protein kinase family. This sequence in the N-terminal section; belongs to the leguminous lectin family.

The protein resides in the membrane. It carries out the reaction L-seryl-[protein] + ATP = O-phospho-L-seryl-[protein] + ADP + H(+). It catalyses the reaction L-threonyl-[protein] + ATP = O-phospho-L-threonyl-[protein] + ADP + H(+). The chain is L-type lectin-domain containing receptor kinase IV.1 (LECRK41) from Arabidopsis thaliana (Mouse-ear cress).